The following is a 422-amino-acid chain: UDP-N-acetylglucosamine 1-carboxyvinyltransferase (422 aa).

22–23 is a phosphoenolpyruvate binding site; it reads KN. UDP-N-acetyl-alpha-D-glucosamine is bound at residue arginine 93. Cysteine 117 (proton donor) is an active-site residue. At cysteine 117 the chain carries 2-(S-cysteinyl)pyruvic acid O-phosphothioketal. UDP-N-acetyl-alpha-D-glucosamine-binding positions include 122 to 126, 162 to 165, aspartate 307, and isoleucine 329; these read RPVDL and KVSV.

It belongs to the EPSP synthase family. MurA subfamily.

It is found in the cytoplasm. It carries out the reaction phosphoenolpyruvate + UDP-N-acetyl-alpha-D-glucosamine = UDP-N-acetyl-3-O-(1-carboxyvinyl)-alpha-D-glucosamine + phosphate. It functions in the pathway cell wall biogenesis; peptidoglycan biosynthesis. Functionally, cell wall formation. Adds enolpyruvyl to UDP-N-acetylglucosamine. The sequence is that of UDP-N-acetylglucosamine 1-carboxyvinyltransferase from Hamiltonella defensa subsp. Acyrthosiphon pisum (strain 5AT).